Reading from the N-terminus, the 240-residue chain is EF-hand domain-containing protein D2 (240 aa).

Ala-2 carries the N-acetylalanine modification. Ser-11 carries the post-translational modification Phosphoserine. Residues 13–38 (RLQMEGEGGGETPEQPGLNGAAAAAA) are disordered. Phosphoserine occurs at positions 74 and 76. A Phosphotyrosine modification is found at Tyr-83. EF-hand domains follow at residues 92-127 (KQIK…LGAP) and 128-163 (QTHL…AAAG). 8 residues coordinate Ca(2+): Asp-105, Asp-109, Glu-116, Asp-141, Asp-143, Asp-145, Lys-147, and Glu-152. Position 233 is an N6-acetyllysine (Lys-233).

As to quaternary structure, interacts with CASP9; with inactive form. As to expression, found in lymphocytes; preferentially expressed in CD8+ cells.

It is found in the membrane raft. Its function is as follows. May regulate B-cell receptor (BCR)-induced immature and primary B-cell apoptosis. Plays a role as negative regulator of the canonical NF-kappa-B-activating branch. Controls spontaneous apoptosis through the regulation of BCL2L1 abundance. The chain is EF-hand domain-containing protein D2 (EFHD2) from Homo sapiens (Human).